We begin with the raw amino-acid sequence, 269 residues long: NAD kinase (269 aa).

Aspartate 45 serves as the catalytic Proton acceptor. Residues aspartate 45–glycine 46, asparagine 122–glutamate 123, arginine 149, aspartate 151, and alanine 186 contribute to the NAD(+) site.

It belongs to the NAD kinase family. The cofactor is a divalent metal cation.

Its subcellular location is the cytoplasm. The catalysed reaction is NAD(+) + ATP = ADP + NADP(+) + H(+). Its function is as follows. Involved in the regulation of the intracellular balance of NAD and NADP, and is a key enzyme in the biosynthesis of NADP. Catalyzes specifically the phosphorylation on 2'-hydroxyl of the adenosine moiety of NAD to yield NADP. The chain is NAD kinase from Staphylococcus epidermidis (strain ATCC 35984 / DSM 28319 / BCRC 17069 / CCUG 31568 / BM 3577 / RP62A).